We begin with the raw amino-acid sequence, 429 residues long: Threonine synthase (429 aa).

Residue Lys108 is modified to N6-(pyridoxal phosphate)lysine.

The protein belongs to the threonine synthase family. The cofactor is pyridoxal 5'-phosphate.

It catalyses the reaction O-phospho-L-homoserine + H2O = L-threonine + phosphate. The protein operates within amino-acid biosynthesis; L-threonine biosynthesis; L-threonine from L-aspartate: step 5/5. In terms of biological role, catalyzes the gamma-elimination of phosphate from L-phosphohomoserine and the beta-addition of water to produce L-threonine. This chain is Threonine synthase (thrC), found in Buchnera aphidicola subsp. Schizaphis graminum (strain Sg).